The primary structure comprises 233 residues: Beta-fibrinogenase brevinase (233 aa).

In terms of domain architecture, Peptidase S1 spans 1–224 (VIGGDECNIN…YIDWIQSIIA (224 aa)). Intrachain disulfides connect cysteine 7-cysteine 138, cysteine 25-cysteine 41, cysteine 73-cysteine 231, cysteine 117-cysteine 185, cysteine 149-cysteine 164, and cysteine 175-cysteine 200. The Charge relay system role is filled by histidine 40. An N-linked (GlcNAc...) asparagine glycan is attached at asparagine 54. The active-site Charge relay system is aspartate 85. Asparagine 129 carries N-linked (GlcNAc...) asparagine glycosylation. The Cell attachment site signature appears at 176–178 (RGD). The active-site Charge relay system is the serine 179. N-linked (GlcNAc...) asparagine glycosylation is present at asparagine 226.

The protein belongs to the peptidase S1 family. Snake venom subfamily. Heterodimer of the brevinase A chain and the brevinase B chain. In terms of tissue distribution, expressed by the venom gland.

It localises to the secreted. Its activity is regulated as follows. The fibrinolytic activity is completely inhibited by PMSF, diisopropylfluorophosphate (DFP), pefabloc, dithiothreitol (DTT) and Zn(2+), but not by Pepstatin A, E64, iodoacetate, chymostatin, tosyl-Lphenylalanine chloromethyl ketone (TPCK), soybean trypsin inhibitor (SBTI), phosphoramidon, Ca(2+), Co(2+), Cu(2+), Fe(2+), Mg(2+), Mn(2+), K(+), and Na(+). Snake venom serine protease that has fibrinogenolytic activities. Preferentially cleaves the Bbeta-chain (FGB) and more slowly the Aa-chain (FGA) of fibrinogen, but does not affect the gamma-chain. Also has fibrinolytic activity. May play a role in antithrombotic reaction as well as thrombolytic reaction. This Gloydius blomhoffii (Mamushi) protein is Beta-fibrinogenase brevinase.